Consider the following 1120-residue polypeptide: Terminal uridylyltransferase 1 (1120 aa).

2 disordered regions span residues 1–156 (MSKY…SAVE) and 196–221 (AALI…PHTP). Residues 7–16 (LFNQGTKDGT) show a composition bias toward polar residues. A compositionally biased stretch (low complexity) spans 17-59 (NASSGSEANSANITSSSAPASSTNTSSPTSSESAVVSPPASTS). A compositionally biased stretch (basic residues) spans 60 to 70 (PRRRLIHRRHG). Residues 90–103 (NEEKHENFISDSVH) are compositionally biased toward basic and acidic residues. Positions 118–128 (LTTSGSETVMS) are enriched in polar residues. Low complexity-rich tracts occupy residues 134-154 (AFEA…STSA) and 207-217 (SSAVSSSSSGS). A C2H2-type; atypical zinc finger spans residues 222-253 (PRLFTCDMCLQYVSTSYEALEQHALDQHGDAL). Zn(2+) contacts are provided by C227, C230, H244, and H249. Residues S330 and 341–344 (SDID) each bind UTP. 2 residues coordinate Mg(2+): D342 and D344. RNA is bound at residue R390. Mg(2+) is bound at residue D548. Residues 555-559 (GIRNS), K580, K584, and 598-599 (SY) contribute to the UTP site. The 39-residue stretch at 659 to 697 (GELLLGFFYYYAFEFDWVNHVVSLNRPGITTKASLGWDV) folds into the PAP-associated domain. Positions 750 to 1120 (GMMASSASAA…ARRVLRLLFR (371 aa)) are important for catalytic activity and RNA binding. Residues 773-782 (IEDPYEENLN) carry the Nucleotide recognition motif (NRM) motif. Residues 800-900 (YRGLLSLLKD…LLSDLEAAFL (101 aa)) form an involved in oligomerization region. The segment at 1047 to 1076 (PSTTTQGEDPLASGTCEQGGVSPSLPTGAP) is disordered.

This sequence belongs to the DNA polymerase type-B-like family. As to quaternary structure, homotetramer. Part of a 700kDa complex. Interacts with p45 and p50 RNA ligases. Requires Mg(2+) as cofactor. The cofactor is Mn(2+).

Its subcellular location is the mitochondrion. It catalyses the reaction RNA(n) + UTP = RNA(n)-3'-uridine ribonucleotide + diphosphate. Its activity is regulated as follows. Zinc-binding is required for catalytic activity. In terms of biological role, terminal uridylyltransferase which is involved in the post-transcriptional editing of mitochondrial RNA, a process involving the addition and deletion of uridine (U) nucleotides in the pre-mRNA. Specifically, catalyzes the addition of Us to the 3'-hydroxyl group of guided RNA (gRNA), with a preference for RNAs terminating in 6 Us, but also can add Us to RNAs terminating in 6 adenines (A), 6 cytosines (C), or 6 guanines (G). Can mediate RNA-independent UTP polymerization in vitro. Can mediate pyrophosphate-dependent degradation of synthetic RNA ending with U residues in vitro. This Leishmania tarentolae (Sauroleishmania tarentolae) protein is Terminal uridylyltransferase 1.